A 442-amino-acid chain; its full sequence is Testican-1 (442 aa).

An N-terminal signal peptide occupies residues 1 to 21 (MPAIAVLAAAAAAWCFLQVDS). 8 disulfide bridges follow: C89–C100, C94–C110, C139–C169, C142–C162, C151–C183, C316–C340, C351–C358, and C360–C379. A Kazal-like domain is found at 133-185 (PSNLVKCKPCPVAQSAMVCGSDGHTYTSKCKLEFHACSTGKSLNSLCDGPCPC). The Thyroglobulin type-1 domain occupies 313 to 379 (GLPCQNEMNR…GSRKQGTVSC (67 aa)). Disordered regions lie at residues 375–395 (GTVS…GGSV) and 420–442 (TRAV…GYIW). S386 and S391 each carry an O-linked (Xyl...) (glycosaminoglycan) serine glycan. The segment covering 425-442 (EDDEDEDDDKEDEVGYIW) has biased composition (acidic residues).

Contains chondroitin sulfate and heparan sulfate O-linked oligosaccharides. In terms of tissue distribution, predominantly expressed in the postsynaptic area of pyramidal neurons.

The protein resides in the secreted. It is found in the extracellular space. The protein localises to the extracellular matrix. Functionally, may play a role in cell-cell and cell-matrix interactions. May contribute to various neuronal mechanisms in the central nervous system. This is Testican-1 (Spock1) from Mus musculus (Mouse).